We begin with the raw amino-acid sequence, 830 residues long: Periplasmic nitrate reductase (830 aa).

The tat-type signal signal peptide spans 1–31; that stretch reads MKLSRRDFMKANAAVAAAAAAGMTIPTVAKA. The region spanning 39–95 is the 4Fe-4S Mo/W bis-MGD-type domain; that stretch reads IKWDKAPCRFCGTGCGVLVGTQNGRIVASQGDPDSPVNRGLNCIKGYFLPKIMYGKD. 4 residues coordinate [4Fe-4S] cluster: Cys46, Cys49, Cys53, and Cys81. Residues Lys83, Gln150, Asn175, Cys179, 212–219, 243–247, 262–264, Met372, Gln376, Asn482, 508–509, Lys531, Asp558, and 718–727 contribute to the Mo-bis(molybdopterin guanine dinucleotide) site; these read WGSNMAEM, STYEH, QTD, SD, and TGRVLEHWHT. Phe794 provides a ligand contact to substrate. Positions 802 and 819 each coordinate Mo-bis(molybdopterin guanine dinucleotide).

It belongs to the prokaryotic molybdopterin-containing oxidoreductase family. NasA/NapA/NarB subfamily. Component of the periplasmic nitrate reductase NapAB complex composed of NapA and NapB. The cofactor is [4Fe-4S] cluster. Mo-bis(molybdopterin guanine dinucleotide) serves as cofactor. Predicted to be exported by the Tat system. The position of the signal peptide cleavage has not been experimentally proven.

The protein localises to the periplasm. The enzyme catalyses 2 Fe(II)-[cytochrome] + nitrate + 2 H(+) = 2 Fe(III)-[cytochrome] + nitrite + H2O. In terms of biological role, catalytic subunit of the periplasmic nitrate reductase complex NapAB. Receives electrons from NapB and catalyzes the reduction of nitrate to nitrite. In Yersinia pestis bv. Antiqua (strain Antiqua), this protein is Periplasmic nitrate reductase.